The sequence spans 1699 residues: Eukaryotic translation initiation factor 2-alpha kinase gcn-2 (1699 aa).

Residues 22 to 138 (EEKLALDAVY…HRVREFLTDH (117 aa)) form the RWD domain. Protein kinase domains are found at residues 108–507 (LTIL…DVVL) and 508–999 (VRNK…DEDL). ATP contacts are provided by residues 114 to 122 (MADTWEGCV), K154, 497 to 505 (LGRGGFGDV), and K520. Disordered regions lie at residues 572–615 (DSSL…SLMP) and 632–725 (KEWS…SVFE). The segment covering 669 to 706 (SSDDEDDDDSSEIDWDAESEEVEDEESDDSDEEDEDDG) has biased composition (acidic residues). Polar residues predominate over residues 711-720 (QLNTETSTGA). D829 (proton acceptor) is an active-site residue.

This sequence belongs to the protein kinase superfamily. Ser/Thr protein kinase family. GCN2 subfamily.

It carries out the reaction L-seryl-[protein] + ATP = O-phospho-L-seryl-[protein] + ADP + H(+). The enzyme catalyses L-threonyl-[protein] + ATP = O-phospho-L-threonyl-[protein] + ADP + H(+). Serine/threonine-protein kinase which phosphorylates the alpha subunit of eukaryotic translation-initiation factor 2 (eIF2alpha), leading to its inactivation and thus to a rapid reduction of translational initiation and repression of global protein synthesis. Involved in the unfolded protein response (UPR) triggered by several stresses including mitochondrial, osmotic and oxidative stresses, amino acid deprivation and UV irradiation, probably by phosphorylating and inhibiting eIF2alpha. In addition, leads to the selective translation/transcription of some mRNA including atf-5, pha-4 and gpdh-1 which are part of the UPR. Required for maintaining lifespan during amino acid starvation. Involved in hypoxia-mediated adaptive protective response. This chain is Eukaryotic translation initiation factor 2-alpha kinase gcn-2, found in Caenorhabditis elegans.